The primary structure comprises 326 residues: Glycerol-3-phosphate dehydrogenase [NAD(P)+] (326 aa).

The NADPH site is built by W15, R35, and K107. Residues K107, G135, and S137 each coordinate sn-glycerol 3-phosphate. A139 lines the NADPH pocket. Residues K190, D243, S253, R254, and N255 each coordinate sn-glycerol 3-phosphate. The active-site Proton acceptor is K190. R254 serves as a coordination point for NADPH. 2 residues coordinate NADPH: L273 and E275.

It belongs to the NAD-dependent glycerol-3-phosphate dehydrogenase family.

It localises to the cytoplasm. It catalyses the reaction sn-glycerol 3-phosphate + NAD(+) = dihydroxyacetone phosphate + NADH + H(+). It carries out the reaction sn-glycerol 3-phosphate + NADP(+) = dihydroxyacetone phosphate + NADPH + H(+). It functions in the pathway membrane lipid metabolism; glycerophospholipid metabolism. Its function is as follows. Catalyzes the reduction of the glycolytic intermediate dihydroxyacetone phosphate (DHAP) to sn-glycerol 3-phosphate (G3P), the key precursor for phospholipid synthesis. This is Glycerol-3-phosphate dehydrogenase [NAD(P)+] from Bradyrhizobium diazoefficiens (strain JCM 10833 / BCRC 13528 / IAM 13628 / NBRC 14792 / USDA 110).